Consider the following 42-residue polypeptide: Photosystem II reaction center protein J (42 aa).

A helical transmembrane segment spans residues 10–30 (IPLWLIGTVVGSLAIGLLAIF).

It belongs to the PsbJ family. PSII is composed of 1 copy each of membrane proteins PsbA, PsbB, PsbC, PsbD, PsbE, PsbF, PsbH, PsbI, PsbJ, PsbK, PsbL, PsbM, PsbT, PsbX, PsbY, PsbZ, Psb30/Ycf12, at least 3 peripheral proteins of the oxygen-evolving complex and a large number of cofactors. It forms dimeric complexes.

It localises to the plastid. Its subcellular location is the chloroplast thylakoid membrane. Its function is as follows. One of the components of the core complex of photosystem II (PSII). PSII is a light-driven water:plastoquinone oxidoreductase that uses light energy to abstract electrons from H(2)O, generating O(2) and a proton gradient subsequently used for ATP formation. It consists of a core antenna complex that captures photons, and an electron transfer chain that converts photonic excitation into a charge separation. The chain is Photosystem II reaction center protein J from Stigeoclonium helveticum (Green alga).